An 859-amino-acid polypeptide reads, in one-letter code: Chitin synthase 1 (859 aa).

A disordered region spans residues 1-22; sequence MRRWFKKTLPRPPDEEESAGLT. 5 consecutive transmembrane segments (helical) span residues 544–564, 615–635, 662–682, 793–813, and 833–853; these read LATI…FYIL, MVIM…WIAY, FINI…VSII, YVVL…LSIP, and LWSV…YLFI.

This sequence belongs to the chitin synthase family.

The protein localises to the cell membrane. The enzyme catalyses [(1-&gt;4)-N-acetyl-beta-D-glucosaminyl](n) + UDP-N-acetyl-alpha-D-glucosamine = [(1-&gt;4)-N-acetyl-beta-D-glucosaminyl](n+1) + UDP + H(+). Polymerizes chitin, a structural polymer of the cell wall and septum, by transferring the sugar moiety of UDP-GlcNAc to the non-reducing end of the growing chitin polymer. The protein is Chitin synthase 1 (chs1) of Schizosaccharomyces pombe (strain 972 / ATCC 24843) (Fission yeast).